The following is a 405-amino-acid chain: Cytochrome P450 109 (405 aa).

Cysteine 351 lines the heme pocket.

The protein belongs to the cytochrome P450 family. Heme serves as cofactor.

In terms of biological role, cytochromes P450 are a group of heme-thiolate monooxygenases. They oxidize a variety of structurally unrelated compounds, including steroids, fatty acids, and xenobiotics. The chain is Cytochrome P450 109 (cyp109) from Bacillus spizizenii (strain ATCC 23059 / NRRL B-14472 / W23) (Bacillus subtilis subsp. spizizenii).